The sequence spans 443 residues: Thymidine phosphorylase (443 aa).

Belongs to the thymidine/pyrimidine-nucleoside phosphorylase family. In terms of assembly, homodimer.

It carries out the reaction thymidine + phosphate = 2-deoxy-alpha-D-ribose 1-phosphate + thymine. The protein operates within pyrimidine metabolism; dTMP biosynthesis via salvage pathway; dTMP from thymine: step 1/2. In terms of biological role, the enzymes which catalyze the reversible phosphorolysis of pyrimidine nucleosides are involved in the degradation of these compounds and in their utilization as carbon and energy sources, or in the rescue of pyrimidine bases for nucleotide synthesis. This chain is Thymidine phosphorylase, found in Shewanella sediminis (strain HAW-EB3).